The following is a 236-amino-acid chain: Adenosine 5'-phosphosulfate reductase (236 aa).

Cys-123, Cys-124, Cys-206, and Cys-209 together coordinate [4Fe-4S] cluster. The Nucleophile; cysteine thiosulfonate intermediate role is filled by Cys-232.

This sequence belongs to the PAPS reductase family. CysH subfamily. It depends on [4Fe-4S] cluster as a cofactor.

It localises to the cytoplasm. The catalysed reaction is [thioredoxin]-disulfide + sulfite + AMP + 2 H(+) = adenosine 5'-phosphosulfate + [thioredoxin]-dithiol. Its pathway is sulfur metabolism; hydrogen sulfide biosynthesis; sulfite from sulfate. In terms of biological role, catalyzes the formation of sulfite from adenosine 5'-phosphosulfate (APS) using thioredoxin as an electron donor. In Streptomyces coelicolor (strain ATCC BAA-471 / A3(2) / M145), this protein is Adenosine 5'-phosphosulfate reductase.